The following is a 243-amino-acid chain: Exosome complex component Rrp41 (243 aa).

Belongs to the RNase PH family. Rrp41 subfamily. As to quaternary structure, component of the archaeal exosome complex. Forms a hexameric ring-like arrangement composed of 3 Rrp41-Rrp42 heterodimers. The hexameric ring associates with a trimer of Rrp4 and/or Csl4 subunits.

Its subcellular location is the cytoplasm. Functionally, catalytic component of the exosome, which is a complex involved in RNA degradation. Has 3'-&gt;5' exoribonuclease activity. Can also synthesize heteromeric RNA-tails. This chain is Exosome complex component Rrp41, found in Sulfolobus acidocaldarius (strain ATCC 33909 / DSM 639 / JCM 8929 / NBRC 15157 / NCIMB 11770).